The chain runs to 333 residues: UDP-glucose 4-epimerase (333 aa).

Residues 11 to 12 (YI), 32 to 37 (DSLVTG), 52 to 53 (DL), 75 to 79 (FAAYS), N94, T119, Y143, K147, and F171 contribute to the NAD(+) site. The substrate site is built by T119 and Y143. Y143 serves as the catalytic Proton acceptor. Residues N172, 191 to 192 (HL), 208 to 210 (MIF), R223, and 284 to 287 (RSGD) each bind substrate.

The protein belongs to the NAD(P)-dependent epimerase/dehydratase family. In terms of assembly, homodimer. The cofactor is NAD(+).

The catalysed reaction is UDP-alpha-D-glucose = UDP-alpha-D-galactose. Its pathway is carbohydrate metabolism; galactose metabolism. Involved in the metabolism of galactose. Catalyzes the conversion of UDP-galactose (UDP-Gal) to UDP-glucose (UDP-Glc) through a mechanism involving the transient reduction of NAD. The protein is UDP-glucose 4-epimerase (galE) of Streptococcus mutans serotype c (strain ATCC 700610 / UA159).